The following is a 361-amino-acid chain: Uroporphyrinogen decarboxylase (361 aa).

Residues 27–31 (RQAGR), Asp-77, Tyr-154, Thr-209, and His-327 each bind substrate.

It belongs to the uroporphyrinogen decarboxylase family. As to quaternary structure, homodimer.

Its subcellular location is the cytoplasm. The catalysed reaction is uroporphyrinogen III + 4 H(+) = coproporphyrinogen III + 4 CO2. It participates in porphyrin-containing compound metabolism; protoporphyrin-IX biosynthesis; coproporphyrinogen-III from 5-aminolevulinate: step 4/4. Catalyzes the decarboxylation of four acetate groups of uroporphyrinogen-III to yield coproporphyrinogen-III. This chain is Uroporphyrinogen decarboxylase, found in Coxiella burnetii (strain RSA 331 / Henzerling II).